Consider the following 501-residue polypeptide: Lysine--tRNA ligase (501 aa).

Positions 402 and 409 each coordinate Mg(2+).

The protein belongs to the class-II aminoacyl-tRNA synthetase family. In terms of assembly, homodimer. Mg(2+) serves as cofactor.

It localises to the cytoplasm. The catalysed reaction is tRNA(Lys) + L-lysine + ATP = L-lysyl-tRNA(Lys) + AMP + diphosphate. This Helicobacter pylori (strain ATCC 700392 / 26695) (Campylobacter pylori) protein is Lysine--tRNA ligase (lysS).